The sequence spans 1453 residues: Scavenger receptor cysteine-rich type 1 protein M160 (1453 aa).

The first 40 residues, 1–40, serve as a signal peptide directing secretion; that stretch reads MMLPQNSWHIDFGRCCCHQNLFSAVVTCILLLNSCFLISS. At 41 to 1359 the chain is on the extracellular side; it reads FNGTDLELRL…LKSLNASSGH (1319 aa). N-linked (GlcNAc...) asparagine glycans are attached at residues Asn-42, Asn-78, Asn-120, and Asn-161. SRCR domains follow at residues 48–148, 155–255, 262–362, 369–469, 476–576, 583–683, 690–790, 795–895, and 900–1000; these read LRLV…VNCY, LRLV…LTCY, LRLV…VICS, LRLA…VICS, LRLV…VTCS, LRLV…LICS, PRLV…VVCS, and VRLV…VICT. Disulfide bonds link Cys-73–Cys-137, Cys-86–Cys-147, and Cys-117–Cys-127. 6 disulfide bridges follow: Cys-180/Cys-244, Cys-193/Cys-254, Cys-224/Cys-234, Cys-287/Cys-351, Cys-300/Cys-361, and Cys-331/Cys-341. 5 N-linked (GlcNAc...) asparagine glycosylation sites follow: Asn-334, Asn-377, Asn-441, Asn-548, and Asn-637. 18 disulfides stabilise this stretch: Cys-394/Cys-458, Cys-407/Cys-468, Cys-438/Cys-448, Cys-501/Cys-565, Cys-514/Cys-575, Cys-545/Cys-555, Cys-608/Cys-672, Cys-621/Cys-682, Cys-652/Cys-662, Cys-715/Cys-779, Cys-728/Cys-789, Cys-759/Cys-769, Cys-820/Cys-884, Cys-833/Cys-894, Cys-864/Cys-874, Cys-925/Cys-989, Cys-938/Cys-999, and Cys-969/Cys-979. Asn-972, Asn-1013, Asn-1084, and Asn-1104 each carry an N-linked (GlcNAc...) asparagine glycan. 3 SRCR domains span residues 1036–1136, 1141–1243, and 1246–1346; these read LRLV…VICS, LRLY…ITCE, and IRVR…VRCS. Intrachain disulfides connect Cys-1061–Cys-1125, Cys-1074–Cys-1135, and Cys-1105–Cys-1115. N-linked (GlcNAc...) asparagine glycosylation is found at Asn-1161 and Asn-1171. 5 disulfide bridges follow: Cys-1181-Cys-1242, Cys-1212-Cys-1222, Cys-1271-Cys-1335, Cys-1284-Cys-1345, and Cys-1315-Cys-1325. Residues Asn-1318 and Asn-1354 are each glycosylated (N-linked (GlcNAc...) asparagine). Residues 1360-1380 traverse the membrane as a helical segment; the sequence is LALILSSIFGLLLLVLFILFL. Topologically, residues 1381-1453 are cytoplasmic; that stretch reads TWCRVQKQKH…GVLPASEATK (73 aa). Basic and acidic residues predominate over residues 1418-1435; that stretch reads EDPHGTRTSDDTPNHGCE. Positions 1418 to 1453 are disordered; it reads EDPHGTRTSDDTPNHGCEDASDTSLLGVLPASEATK.

Isoform 1 is highly expressed in the spleen, lymph nodes, thymus, and fetal liver and weakly expressed in bone marrow and no expression was found in peripheral blood leukocytes. Isoform 1 expression is restricted to the monocyte and macrophage cell lines. Isoform 2 is only expressed in spleen.

Its subcellular location is the cell membrane. It is found in the secreted. In Homo sapiens (Human), this protein is Scavenger receptor cysteine-rich type 1 protein M160 (CD163L1).